We begin with the raw amino-acid sequence, 65 residues long: Conotoxin Bu19 (65 aa).

The N-terminal stretch at 1–21 (MGMRMVFTVFLLVVLATTVVS) is a signal peptide. The propeptide occupies 22–48 (FTSDRASDGRNAAANDKASDLAALAVR). 2 disulfides stabilise this stretch: Cys-50–Cys-56 and Cys-51–Cys-64. At Cys-64 the chain carries Cysteine amide.

It belongs to the conotoxin A superfamily. In terms of tissue distribution, expressed by the venom duct.

It is found in the secreted. This chain is Conotoxin Bu19, found in Conus bullatus (Bubble cone).